Here is a 393-residue protein sequence, read N- to C-terminus: Chorismate synthase (393 aa).

The NADP(+) site is built by arginine 40 and arginine 46. FMN is bound by residues 135-137 (RAS), 257-258 (QA), glycine 301, 316-320 (KPIAT), and arginine 342. Positions 280–306 (DEIDVGPDGIRRRSNRAGGVEGGMSTG) are disordered.

This sequence belongs to the chorismate synthase family. As to quaternary structure, homotetramer. It depends on FMNH2 as a cofactor.

The enzyme catalyses 5-O-(1-carboxyvinyl)-3-phosphoshikimate = chorismate + phosphate. The protein operates within metabolic intermediate biosynthesis; chorismate biosynthesis; chorismate from D-erythrose 4-phosphate and phosphoenolpyruvate: step 7/7. Its function is as follows. Catalyzes the anti-1,4-elimination of the C-3 phosphate and the C-6 proR hydrogen from 5-enolpyruvylshikimate-3-phosphate (EPSP) to yield chorismate, which is the branch point compound that serves as the starting substrate for the three terminal pathways of aromatic amino acid biosynthesis. This reaction introduces a second double bond into the aromatic ring system. This chain is Chorismate synthase, found in Thermobifida fusca (strain YX).